The primary structure comprises 240 residues: Uridylate kinase (240 aa).

13–16 provides a ligand contact to ATP; the sequence is KLSG. Positions 21-26 are involved in allosteric activation by GTP; the sequence is GDKGFG. Gly55 is a UMP binding site. ATP is bound by residues Gly56 and Arg60. Residues Asp75 and 136–143 each bind UMP; that span reads IGNPYFST. ATP-binding residues include Asn164, Tyr170, and Asp173.

This sequence belongs to the UMP kinase family. As to quaternary structure, homohexamer.

The protein localises to the cytoplasm. The enzyme catalyses UMP + ATP = UDP + ADP. The protein operates within pyrimidine metabolism; CTP biosynthesis via de novo pathway; UDP from UMP (UMPK route): step 1/1. Allosterically activated by GTP. Inhibited by UTP. Catalyzes the reversible phosphorylation of UMP to UDP. The chain is Uridylate kinase from Staphylococcus haemolyticus (strain JCSC1435).